The sequence spans 1248 residues: ATP-dependent helicase/nuclease subunit A (1248 aa).

One can recognise a UvrD-like helicase ATP-binding domain in the interval 4–480; that stretch reads TKWTKEQYAA…ILLFKNFRSR (477 aa). 25 to 32 is a binding site for ATP; sequence AAAGAGKT. The UvrD-like helicase C-terminal domain maps to 523-820; that stretch reads ETVVGGAIEL…RLMSIHKSKG (298 aa).

This sequence belongs to the helicase family. AddA subfamily. In terms of assembly, heterodimer of AddA and AddB/RexB. Mg(2+) is required as a cofactor.

The enzyme catalyses Couples ATP hydrolysis with the unwinding of duplex DNA by translocating in the 3'-5' direction.. The catalysed reaction is ATP + H2O = ADP + phosphate + H(+). In terms of biological role, the heterodimer acts as both an ATP-dependent DNA helicase and an ATP-dependent, dual-direction single-stranded exonuclease. Recognizes the chi site generating a DNA molecule suitable for the initiation of homologous recombination. The AddA nuclease domain is required for chi fragment generation; this subunit has the helicase and 3' -&gt; 5' nuclease activities. The chain is ATP-dependent helicase/nuclease subunit A from Ruminiclostridium cellulolyticum (strain ATCC 35319 / DSM 5812 / JCM 6584 / H10) (Clostridium cellulolyticum).